A 357-amino-acid polypeptide reads, in one-letter code: Peptide chain release factor 1 (357 aa).

Residue glutamine 234 is modified to N5-methylglutamine.

The protein belongs to the prokaryotic/mitochondrial release factor family. Post-translationally, methylated by PrmC. Methylation increases the termination efficiency of RF1.

It localises to the cytoplasm. Functionally, peptide chain release factor 1 directs the termination of translation in response to the peptide chain termination codons UAG and UAA. The chain is Peptide chain release factor 1 (prfA) from Lactococcus lactis subsp. lactis (strain IL1403) (Streptococcus lactis).